The chain runs to 113 residues: Small ribosomal subunit protein bS6 (113 aa).

Belongs to the bacterial ribosomal protein bS6 family.

Its function is as follows. Binds together with bS18 to 16S ribosomal RNA. In Flavobacterium psychrophilum (strain ATCC 49511 / DSM 21280 / CIP 103535 / JIP02/86), this protein is Small ribosomal subunit protein bS6.